The primary structure comprises 406 residues: MKLSTLFTLATTISTLTTFTIASPVVVVEKRAINETALAEDIPTTKNNHAQASYGKPFAIYQPKAFIISMFSLERDPWLKAMDFVHNITIPGLSPVYPDIHCTTNYTICQITTGEGEINAASSISALTLNPLFDLTKTYFLVGGIAGGEPNYTTIGGVTFAKYAVQVGLEYQLAYEDYHKTNPDWISGYIPYGTDDQNTYPGNVYGTEVFEVNEKLRDRAVELASKVHLNNGTEGNAKFRKLYNETAAQGLPKVVKCDSLTSDNYFTGNVLNDYFANFTLLMTNGSATYCSTAQEDNATLEVMTRLAKHGLVDYDRIMIMRTISDFSRPPPSMSAYEYFFNRSDGGISASLENLVIAGTPIIHDIVQNWDKIYKSGEKYSSKNYVGDIFATLGGKPDFGKESFDTA.

An N-terminal signal peptide occupies residues M1–A22.

The protein belongs to the NUP family.

Mammalian nucleoside transport inhibitors dipyridamole and NBMPR inhibit adenosine transport by NUP. Nucleoside permease that transports adenosine and guanosine. Does not show any transport activities towards cytidine, adenine, guanine, uridine, and uracil. The protein is Purine nucleoside permease of Candida albicans (Yeast).